The chain runs to 1075 residues: MKPDRDALDEYFEYDAEEFLVSLALLITEGRTPECSVKGRAESFHCPPAQSRFPGTARHECSDKLAQCRQARRTRSEVTLLWKNNLPIMVEVMLLPDCCYSDEGPSTEGADLNDPAIKQDALLLERWILEPVPRQNGDRFIEEKALLLAVRSFVFFSQLSAWLSVSHGAIPRNILYRISAADVDLQWSFSQTPTEHVFPVPNVSHNVALKVSVQSLPRQAHYPVLTCSIHTNIGLYEKRIQEQELRACQHHGPGEVEYRCPSSSQSLCSKHTWTMAPVSALHVRSGMPPEYTAAIRNVRLCPGTGSKSDQGAPQASVLGFSGTGGEVRSQEASVRTFKSLPVVDSSVSSCQSSRQPVGEPNPLMDSLIQDRQEVIARIAQHLIHCDPSSSRMSELPFNTQESTSLSPKLHPVSQESGCVRRYKEAFSVSFGSPEFGSPGDSREGKVREKSETRPGETCTSHSLYPRQPAGEANPLIGSLLQERQDVIARIAQHLEHIDPAAHIPRPAFSKHDSNSIPSKVFRSSFDDKTLLKKGRENVSVSVSHTEVSLLGDRGDGESLKPSKCLRSFKYSPQEKPLKPEVRTQHQNHPDSITPTARQELLNKAAGLLTSSNTALCKESSLGLVSRLESTSCKLQLKEQEMSHETEKQCLHCNSIDKQICTNTCTEKINDEHSPGSLRHLQCDDSKGIDSKLKVTLLEMPDSLNKNKTNCSSKDSKRSKTCEQSIRVGTENDLSEENEGPGSTVSDRLKTEQEAKRDSGAGKPHSVKHCLSAGERLHSADMLRTTLKHSSVWRKHNFHSLDGTSTRAFHPQTGLPLLSSPVPQRKTQSGCFDLDASLLHLRSLSSKSSRPCLNIDEDPDVHEKPFLSSSAPPITSLSLLGNFEESVLNYRLDPLGIVDGFTAEVGASGTFCPTHLTLPVEVSFYSVSDDNAPSPYMGVITLESLGKRGYRVPPSGTIQVTLFNPNKTVVKMFVVVYDLRGMPANHQTFLRQRTFSVPVKQEMKRSINKENVQHTAQLLRYLIHLRFQSSKSGKIYLHRDVRLLFSRKSMEVDSGAAYELKSYTESPTNPQFSPRC.

The tract at residues 24 to 32 (ALLITEGRT) is transactivation domain 1 (TAD1). Disordered regions lie at residues 430–469 (FGSPEFGSPGDSREGKVREKSETRPGETCTSHSLYPRQPA), 570–592 (YSPQEKPLKPEVRTQHQNHPDSI), and 703–766 (LNKN…PHSV). Residues 440–454 (DSREGKVREKSETRP) show a composition bias toward basic and acidic residues. Residues 703–712 (LNKNKTNCSS) are compositionally biased toward polar residues. Residues 746–759 (DRLKTEQEAKRDSG) show a composition bias toward basic and acidic residues. The interval 878–935 (LLGNFEESVLNYRLDPLGIVDGFTAEVGASGTFCPTHLTLPVEVSFYSVSDDNAPSPY) is required for macropage invasion. The interval 962–970 (FNPNKTVVK) is transactivation domain 2 (TAD2).

Belongs to the ATOS family.

The protein resides in the nucleus. Functionally, transcription regulator that syncronizes transcriptional and translational programs to promote macrophage invasion of tissues. The chain is Atos homolog protein A (Atosa) from Mus musculus (Mouse).